We begin with the raw amino-acid sequence, 277 residues long: MIOREX complex component 2 (277 aa).

This sequence belongs to the NAD(P)-dependent epimerase/dehydratase family. As to quaternary structure, associates with the mitochondrial ribosome. Component of a multi-subunit COQ enzyme complex.

The protein resides in the mitochondrion. It functions in the pathway cofactor biosynthesis; ubiquinone biosynthesis. Component of MIOREX complexes, large expressome-like assemblies of ribosomes with factors involved in all the steps of post-transcriptional gene expression. Component of a multi-subunit COQ enzyme complex required for coenzyme Q biosynthesis. This chain is MIOREX complex component 2, found in Saccharomyces cerevisiae (strain ATCC 204508 / S288c) (Baker's yeast).